The primary structure comprises 86 residues: Acyl carrier protein (86 aa).

A Carrier domain is found at 10-85 (DKIEQKVIEM…DVIKYIKERQ (76 aa)). Ser45 is modified (O-(pantetheine 4'-phosphoryl)serine).

This sequence belongs to the acyl carrier protein (ACP) family. In terms of processing, 4'-phosphopantetheine is transferred from CoA to a specific serine of apo-ACP by AcpS. This modification is essential for activity because fatty acids are bound in thioester linkage to the sulfhydryl of the prosthetic group.

Its subcellular location is the cytoplasm. The protein operates within lipid metabolism; fatty acid biosynthesis. In terms of biological role, carrier of the growing fatty acid chain in fatty acid biosynthesis. In Rickettsia africae (strain ESF-5), this protein is Acyl carrier protein.